Here is a 242-residue protein sequence, read N- to C-terminus: ATP synthase subunit a, organellar chromatophore (242 aa).

5 consecutive transmembrane segments (helical) span residues 28–48 (LHGQ…VLVI), 89–109 (LPFI…GALV), 128–148 (INTT…AGLS), 193–213 (LVVG…AMFL), and 214–234 (GLFT…NYIG).

Belongs to the ATPase A chain family. F-type ATPases have 2 components, CF(1) - the catalytic core - and CF(0) - the membrane proton channel. CF(1) has five subunits: alpha(3), beta(3), gamma(1), delta(1), epsilon(1). CF(0) has four main subunits: a, b, b' and c.

It is found in the plastid. The protein localises to the organellar chromatophore thylakoid membrane. Functionally, key component of the proton channel; it plays a direct role in the translocation of protons across the membrane. The chain is ATP synthase subunit a, organellar chromatophore from Paulinella chromatophora.